A 390-amino-acid chain; its full sequence is DNA polymerase IV (390 aa).

The 182-residue stretch at valine 6–glycine 187 folds into the UmuC domain. Aspartate 10 and aspartate 105 together coordinate Mg(2+). The active site involves glutamate 106.

This sequence belongs to the DNA polymerase type-Y family. Monomer. It depends on Mg(2+) as a cofactor.

It is found in the cytoplasm. The enzyme catalyses DNA(n) + a 2'-deoxyribonucleoside 5'-triphosphate = DNA(n+1) + diphosphate. Poorly processive, error-prone DNA polymerase involved in untargeted mutagenesis. Copies undamaged DNA at stalled replication forks, which arise in vivo from mismatched or misaligned primer ends. These misaligned primers can be extended by PolIV. Exhibits no 3'-5' exonuclease (proofreading) activity. May be involved in translesional synthesis, in conjunction with the beta clamp from PolIII. In Dehalococcoides mccartyi (strain ATCC BAA-2266 / KCTC 15142 / 195) (Dehalococcoides ethenogenes (strain 195)), this protein is DNA polymerase IV.